The chain runs to 411 residues: Translation initiation factor 2 subunit gamma (411 aa).

Residues 9–203 (QAEVNIGMVG…AIQDFIPTPK (195 aa)) form the tr-type G domain. The G1 stretch occupies residues 18–25 (GHVDHGKT). The Mg(2+) site is built by aspartate 21, threonine 25, glycine 46, and serine 48. 21–26 (DHGKTS) lines the GTP pocket. A G2 region spans residues 46–50 (GISIR). Residues cysteine 61, cysteine 64, cysteine 73, and cysteine 76 each contribute to the Zn(2+) site. Positions 90-93 (DSPG) are G3. GTP is bound by residues 146 to 149 (NKID) and 181 to 183 (SAH). Residues 146-149 (NKID) form a G4 region. Residues 181–183 (SAH) form a G5 region.

It belongs to the TRAFAC class translation factor GTPase superfamily. Classic translation factor GTPase family. EIF2G subfamily. In terms of assembly, heterotrimer composed of an alpha, a beta and a gamma chain. It depends on Mg(2+) as a cofactor.

The catalysed reaction is GTP + H2O = GDP + phosphate + H(+). Functionally, eIF-2 functions in the early steps of protein synthesis by forming a ternary complex with GTP and initiator tRNA. This is Translation initiation factor 2 subunit gamma from Methanocaldococcus jannaschii (strain ATCC 43067 / DSM 2661 / JAL-1 / JCM 10045 / NBRC 100440) (Methanococcus jannaschii).